An 875-amino-acid polypeptide reads, in one-letter code: Leucine--tRNA ligase (875 aa).

The 'HIGH' region signature appears at 43–53 (PYPSGRIHMGH). The 'KMSKS' region motif lies at 633 to 637 (KMSKS). Residue K636 participates in ATP binding.

The protein belongs to the class-I aminoacyl-tRNA synthetase family.

It is found in the cytoplasm. It carries out the reaction tRNA(Leu) + L-leucine + ATP = L-leucyl-tRNA(Leu) + AMP + diphosphate. The protein is Leucine--tRNA ligase of Bartonella bacilliformis (strain ATCC 35685 / KC583 / Herrer 020/F12,63).